A 235-amino-acid polypeptide reads, in one-letter code: Pyridoxine 5'-phosphate synthase (235 aa).

Asparagine 6 serves as a coordination point for 3-amino-2-oxopropyl phosphate. 8–9 (DH) serves as a coordination point for 1-deoxy-D-xylulose 5-phosphate. Arginine 17 provides a ligand contact to 3-amino-2-oxopropyl phosphate. Histidine 42 functions as the Proton acceptor in the catalytic mechanism. The 1-deoxy-D-xylulose 5-phosphate site is built by arginine 44 and histidine 49. Glutamate 69 serves as the catalytic Proton acceptor. Threonine 99 lines the 1-deoxy-D-xylulose 5-phosphate pocket. Histidine 189 acts as the Proton donor in catalysis. 3-amino-2-oxopropyl phosphate contacts are provided by residues glycine 190 and 211 to 212 (GH).

It belongs to the PNP synthase family. In terms of assembly, homooctamer; tetramer of dimers.

It localises to the cytoplasm. It carries out the reaction 3-amino-2-oxopropyl phosphate + 1-deoxy-D-xylulose 5-phosphate = pyridoxine 5'-phosphate + phosphate + 2 H2O + H(+). It participates in cofactor biosynthesis; pyridoxine 5'-phosphate biosynthesis; pyridoxine 5'-phosphate from D-erythrose 4-phosphate: step 5/5. In terms of biological role, catalyzes the complicated ring closure reaction between the two acyclic compounds 1-deoxy-D-xylulose-5-phosphate (DXP) and 3-amino-2-oxopropyl phosphate (1-amino-acetone-3-phosphate or AAP) to form pyridoxine 5'-phosphate (PNP) and inorganic phosphate. In Chlorobium chlorochromatii (strain CaD3), this protein is Pyridoxine 5'-phosphate synthase.